A 171-amino-acid chain; its full sequence is Neuronal vesicle trafficking-associated protein 2 (171 aa).

The interval 1-21 (MVKLNSNPGEKGAKPPSVEDG) is disordered. Residues 1–71 (MVKLNSNPGE…FRVPKIAEFT (71 aa)) lie on the Cytoplasmic side of the membrane. Residues 72–92 (VTILVSLALAFLACIVFLVVY) traverse the membrane as a helical; Signal-anchor for type II membrane protein segment. The Lumenal segment spans residues 93–171 (KAFTYDHSCP…EPKPPKTQGH (79 aa)).

This sequence belongs to the NSG family. As to expression, specifically expressed in neural and neuroendocrine tissues. Pituitary and less in adrenal gland and testis. Expressed in the hippocampus throughout development. Remains enriched in layer V cortical neurons during development. At P0, broadly expressed in the neocortex. Is down-regulated overall at P8 and P14, but remains relatively enriched in layer V. At P0 is lower expressed in the cerebellum. Expression remains low throughout development, and is undetectable by adulthood.

Its subcellular location is the membrane. It localises to the golgi apparatus. The protein localises to the trans-Golgi network membrane. The protein resides in the cell projection. It is found in the dendrite. Its subcellular location is the endosome membrane. It localises to the early endosome membrane. The protein localises to the late endosome membrane. The protein resides in the lysosome lumen. It is found in the cytoplasmic vesicle membrane. Its subcellular location is the golgi stack membrane. It localises to the endosome. The protein localises to the multivesicular body membrane. This Mus musculus (Mouse) protein is Neuronal vesicle trafficking-associated protein 2.